The primary structure comprises 132 residues: MSTHDPISDLITRIRNAQMRAKSKVSTPGSKMRANVLEVLKNEGYIRGYASVDHASGRSELEIELKYFDGEPVIREIERVSKPGRRVYASVKNLPRVNNGLGISVLSTPKGIMADHEARDANVGGEVLFTVF.

The protein belongs to the universal ribosomal protein uS8 family. In terms of assembly, part of the 30S ribosomal subunit. Contacts proteins S5 and S12.

Its function is as follows. One of the primary rRNA binding proteins, it binds directly to 16S rRNA central domain where it helps coordinate assembly of the platform of the 30S subunit. This chain is Small ribosomal subunit protein uS8, found in Rhodopseudomonas palustris (strain BisB18).